A 258-amino-acid chain; its full sequence is Regulatory protein RecX (258 aa).

It belongs to the RecX family.

Its subcellular location is the cytoplasm. Modulates RecA activity. This chain is Regulatory protein RecX, found in Streptococcus pneumoniae serotype 19F (strain G54).